The chain runs to 74 residues: Ubiquitin-like protein FUBI (74 aa).

The protein belongs to the ubiquitin family.

Confers arsenite resistance. This is Ubiquitin-like protein FUBI (FAU) from Cricetulus griseus (Chinese hamster).